A 419-amino-acid chain; its full sequence is tRNA modification GTPase MnmE (419 aa).

(6S)-5-formyl-5,6,7,8-tetrahydrofolate contacts are provided by Arg2, Glu59, and Arg99. Residues 197 to 343 (GLSVVIAGPP…LHTMIVEMAR (147 aa)) enclose the TrmE-type G domain. Asn207 serves as a coordination point for K(+). Residues 207-212 (NAGKST), 226-232 (SPVAGTT), and 251-254 (DTAG) contribute to the GTP site. Ser211 provides a ligand contact to Mg(2+). K(+)-binding residues include Ser226, Val228, and Thr231. Residue Thr232 participates in Mg(2+) binding. Residue Lys419 coordinates (6S)-5-formyl-5,6,7,8-tetrahydrofolate.

Belongs to the TRAFAC class TrmE-Era-EngA-EngB-Septin-like GTPase superfamily. TrmE GTPase family. As to quaternary structure, homodimer. Heterotetramer of two MnmE and two MnmG subunits. The cofactor is K(+).

Its subcellular location is the cytoplasm. Its function is as follows. Exhibits a very high intrinsic GTPase hydrolysis rate. Involved in the addition of a carboxymethylaminomethyl (cmnm) group at the wobble position (U34) of certain tRNAs, forming tRNA-cmnm(5)s(2)U34. This is tRNA modification GTPase MnmE from Sphingopyxis alaskensis (strain DSM 13593 / LMG 18877 / RB2256) (Sphingomonas alaskensis).